The following is a 52-amino-acid chain: UPF0181 protein CGSHiGG_01050 (52 aa).

The protein belongs to the UPF0181 family.

This is UPF0181 protein CGSHiGG_01050 from Haemophilus influenzae (strain PittGG).